Consider the following 89-residue polypeptide: Small ribosomal subunit protein bS20 (89 aa).

The protein belongs to the bacterial ribosomal protein bS20 family.

Binds directly to 16S ribosomal RNA. This chain is Small ribosomal subunit protein bS20, found in Stenotrophomonas maltophilia (strain K279a).